A 258-amino-acid polypeptide reads, in one-letter code: Imidazole glycerol phosphate synthase subunit HisF (258 aa).

Catalysis depends on residues D11 and D130.

Belongs to the HisA/HisF family. In terms of assembly, heterodimer of HisH and HisF.

The protein resides in the cytoplasm. The catalysed reaction is 5-[(5-phospho-1-deoxy-D-ribulos-1-ylimino)methylamino]-1-(5-phospho-beta-D-ribosyl)imidazole-4-carboxamide + L-glutamine = D-erythro-1-(imidazol-4-yl)glycerol 3-phosphate + 5-amino-1-(5-phospho-beta-D-ribosyl)imidazole-4-carboxamide + L-glutamate + H(+). It functions in the pathway amino-acid biosynthesis; L-histidine biosynthesis; L-histidine from 5-phospho-alpha-D-ribose 1-diphosphate: step 5/9. Its function is as follows. IGPS catalyzes the conversion of PRFAR and glutamine to IGP, AICAR and glutamate. The HisF subunit catalyzes the cyclization activity that produces IGP and AICAR from PRFAR using the ammonia provided by the HisH subunit. The sequence is that of Imidazole glycerol phosphate synthase subunit HisF from Rhodopseudomonas palustris (strain BisB18).